We begin with the raw amino-acid sequence, 127 residues long: Glycine cleavage system H protein (127 aa).

One can recognise a Lipoyl-binding domain in the interval 23-104 (TALVGLTDYA…PYEAWFAKIT (82 aa)). Lysine 64 carries the post-translational modification N6-lipoyllysine.

Belongs to the GcvH family. In terms of assembly, the glycine cleavage system is composed of four proteins: P, T, L and H. Requires (R)-lipoate as cofactor.

Its function is as follows. The glycine cleavage system catalyzes the degradation of glycine. The H protein shuttles the methylamine group of glycine from the P protein to the T protein. This Lachnoclostridium phytofermentans (strain ATCC 700394 / DSM 18823 / ISDg) (Clostridium phytofermentans) protein is Glycine cleavage system H protein.